A 549-amino-acid polypeptide reads, in one-letter code: uncharacterized protein (549 aa).

The next 12 helical transmembrane spans lie at 27 to 47, 108 to 128, 146 to 166, 197 to 217, 233 to 253, 265 to 285, 308 to 328, 352 to 372, 399 to 419, 434 to 454, 472 to 492, and 501 to 521; these read ILRF…YVFV, PIVV…GVIF, TGLV…LAIA, AVAI…IPML, FIAI…FLLV, VAAI…LISL, FLVI…LSIL, LVLL…IFGV, TLLV…VGLG, LMLA…VAIG, IVSL…FQAI, and IFIW…VLIG.

It localises to the cell membrane. This is an uncharacterized protein from Mycoplasma pneumoniae (strain ATCC 29342 / M129 / Subtype 1) (Mycoplasmoides pneumoniae).